Consider the following 343-residue polypeptide: 2-deoxy-scyllo-inosamine dehydrogenase (343 aa).

Zn(2+) is bound by residues cysteine 37, histidine 59, cysteine 91, cysteine 94, cysteine 97, cysteine 105, and glutamate 146.

It belongs to the zinc-containing alcohol dehydrogenase family. DOIA dehydrogenase subfamily. The cofactor is Zn(2+).

It carries out the reaction 2-deoxy-scyllo-inosamine + NADP(+) = 3-amino-2,3-dideoxy-scyllo-inosose + NADPH + H(+). The enzyme catalyses 2-deoxy-scyllo-inosamine + NAD(+) = 3-amino-2,3-dideoxy-scyllo-inosose + NADH + H(+). It participates in metabolic intermediate biosynthesis; 2-deoxystreptamine biosynthesis; 2-deoxystreptamine from D-glucose 6-phosphate: step 3/4. It functions in the pathway antibiotic biosynthesis; kanamycin biosynthesis. In terms of biological role, catalyzes the oxidation of 2-deoxy-scyllo-inosamine (DOIA) with NAD(+) or NADP(+), forming 3-amino-2,3-dideoxy-scyllo-inosose (amino-DOI). This is 2-deoxy-scyllo-inosamine dehydrogenase (kanE) from Streptomyces kanamyceticus.